The following is a 1170-amino-acid chain: Integrin alpha-2 (1170 aa).

The N-terminal stretch at 1–18 (PLQLVLVFSQGILNCCVA) is a signal peptide. Over 19–1121 (YNVGLPKAKI…KPHEKVEVPT (1103 aa)) the chain is Extracellular. FG-GAP repeat units follow at residues 23–81 (LPKA…TTTC) and 90–150 (TSMS…LRTS). A disulfide bridge connects residues Cys72 and Cys81. N-linked (GlcNAc...) asparagine glycosylation is found at Asn94, Asn101, and Asn332. Residues 177–354 (WDAVKNFLEK…TIGEQIFSIE (178 aa)) form the VWFA domain. 5 FG-GAP repeats span residues 355 to 409 (GTVQ…LIFS), 412 to 464 (AFEQ…ENGN), 466 to 528 (TVIQ…ILNW), 529 to 587 (HQFL…MIRL), and 591 to 653 (QKIL…FTPK). Residues Asn421, Asn449, and Asn464 are each glycosylated (N-linked (GlcNAc...) asparagine). The Cell attachment site motif lies at 472-474 (RGD). Asp488, Asn490, Asp492, Asp496, Asp552, Asn554, Asp556, Asp560, Asp616, Asn618, Asp620, and Asp624 together coordinate Ca(2+). The cysteines at positions 669 and 726 are disulfide-linked. N-linked (GlcNAc...) asparagine glycans are attached at residues Asn688 and Asn748. Intrachain disulfides connect Cys778–Cys784 and Cys854–Cys865. The N-linked (GlcNAc...) asparagine glycan is linked to Asn945. 2 disulfide bridges follow: Cys1008-Cys1039 and Cys1044-Cys1049. 2 N-linked (GlcNAc...) asparagine glycosylation sites follow: Asn1063 and Asn1070. The chain crosses the membrane as a helical span at residues 1122–1143 (GVIVGSVIAGILLLLALVAILW). Topologically, residues 1144-1170 (KLGFFKRKYEKMAKNPDETDETTELNS) are cytoplasmic. The GFFKR motif signature appears at 1146 to 1150 (GFFKR).

It belongs to the integrin alpha chain family. As to quaternary structure, heterodimer of an alpha and a beta subunit. Alpha-2 associates with beta-1. Interacts with HPS5 and RAB21.

Its subcellular location is the membrane. Functionally, integrin alpha-2/beta-1 is a receptor for laminin, collagen, collagen C-propeptides, fibronectin and E-cadherin. It recognizes the proline-hydroxylated sequence G-F-P-G-E-R in collagen. It is responsible for adhesion of platelets and other cells to collagens, modulation of collagen and collagenase gene expression, force generation and organization of newly synthesized extracellular matrix. This Bos taurus (Bovine) protein is Integrin alpha-2 (ITGA2).